The sequence spans 492 residues: MAKDQIRNGRLEGERSALIEQYLSSMEADKQIAESDIRVDIAHILMLRKQNLIDGASAKKLLTALLGYLENGLPENAFDMTREDIHAGIEAQLIADAGSDAGGRMHLGRSRNDEVATCLRMRTRELLIDTLTALFELRQSLISRAEEHTTTIMPGFTHLQHAQPTTLAHYLLAYESLFARDTSRLFDAYTRVNISPLGSAAFAGTGFPIDRSLTAEYLGFANPMENSMDAVANRDFIVETLSDLAILMTNISRICEELILWSTSFVKFVNLNDAYCSTSSIMPQKKNPDTLEIMRAKSAAVIGELTAALTLIKSLPMSYNRDLQDLNPHLWNAFRQTNMSLPLLAEIISTAEFNVPVMKKQAVVGNTTATELADFLVREYNIPFRTAHNIVGRAVKLGSLDLDIVDSVAKELANISLKEKGLTEETIKKVLHPVTILRQKQSFGSPNPKMMKKAVKVADIRLVQDQVTGDILQDQLRDADEKMKTAIQELDL.

The protein belongs to the lyase 1 family. Argininosuccinate lyase subfamily.

The protein localises to the cytoplasm. The catalysed reaction is 2-(N(omega)-L-arginino)succinate = fumarate + L-arginine. It functions in the pathway amino-acid biosynthesis; L-arginine biosynthesis; L-arginine from L-ornithine and carbamoyl phosphate: step 3/3. The protein is Argininosuccinate lyase of Methanocorpusculum labreanum (strain ATCC 43576 / DSM 4855 / Z).